Reading from the N-terminus, the 368-residue chain is Ferrochelatase (368 aa).

Positions 209 and 290 each coordinate Fe cation. A disordered region spans residues 347-368 (REEQEQQAHISREEARRLGADQ).

The protein belongs to the ferrochelatase family.

It is found in the cytoplasm. The enzyme catalyses heme b + 2 H(+) = protoporphyrin IX + Fe(2+). The protein operates within porphyrin-containing compound metabolism; protoheme biosynthesis; protoheme from protoporphyrin-IX: step 1/1. In terms of biological role, catalyzes the ferrous insertion into protoporphyrin IX. The sequence is that of Ferrochelatase from Janthinobacterium sp. (strain Marseille) (Minibacterium massiliensis).